Consider the following 145-residue polypeptide: Immunoglobulin iota chain (145 aa).

The signal sequence occupies residues 1-19 (MSWAPVLLMLFVYCTGCGP). Residues 20–41 (QPVLHQPPAMSSALGTTIRLTC) are framework-1. In terms of domain architecture, Ig-like V-type spans 20 to 132 (QPVLHQPPAM…EKEEREREWE (113 aa)). A disulfide bridge connects residues cysteine 41 and cysteine 115. Residues 42-56 (TLRNDHDIGVYSVYW) are complementarity-determining-1. The interval 57–70 (YQQRPGHPPRFLLR) is framework-2. The tract at residues 71–81 (YFSQSDKSQGP) is complementarity-determining-2. Residues 82 to 115 (QVPPRFSGSKDVARNRGYLSISELQPEDEAMYYC) are framework-3. Positions 121–130 (SSEKEERERE) are enriched in basic and acidic residues. The interval 121 to 145 (SSEKEEREREWEEEMEPTAARTRVP) is disordered.

Belongs to the immunoglobulin superfamily. As to quaternary structure, interacts with IGLL1. Interacts with SYNV1/HRD1 (via N-terminus); this interaction leads to increased VPREB1 ubiquitination and degradation in pre-B cells, possibly through a lysosomal, not proteasomal, pathway. Only expressed by pre-B-cells.

It is found in the endoplasmic reticulum. Functionally, associates with the Ig-mu chain to form a molecular complex that is expressed on the surface of pre-B-cells. This complex presumably regulates Ig gene rearrangements in the early steps of B-cell differentiation. The sequence is that of Immunoglobulin iota chain (VPREB1) from Homo sapiens (Human).